The sequence spans 774 residues: Effector protein hopW1-1 (774 aa).

Disordered regions lie at residues 1–33 and 301–340; these read MSPA…QSPQ and CQAG…VPGQ. A compositionally biased stretch (low complexity) spans 9–23; it reads TPHSFPPSFTGTSSS. Residues 24-33 show a composition bias toward polar residues; the sequence is AENSHAQSPQ.

The protein belongs to the HopW family. As to quaternary structure, interacts (via C-terminus) with Arabidopsis WIN1, WIN2 and WIN3.

It localises to the secreted. In terms of biological role, induces hypersensitive response (HR). The sequence is that of Effector protein hopW1-1 (hopW1-1) from Pseudomonas syringae pv. maculicola.